We begin with the raw amino-acid sequence, 230 residues long: Probable carboxylesterase Culp2 (230 aa).

A signal peptide (tat-type signal) is located at residues methionine 1 to alanine 32. A disulfide bridge links cysteine 45 with cysteine 112. Catalysis depends on serine 123, which acts as the Nucleophile. Cysteines 185 and 192 form a disulfide. Aspartate 189 is a catalytic residue. Catalysis depends on histidine 207, which acts as the Proton donor/acceptor.

It belongs to the cutinase family. Post-translationally, predicted to be exported by the Tat system. The position of the signal peptide cleavage has not been experimentally proven.

The protein resides in the secreted. Its subcellular location is the cell surface. The chain is Probable carboxylesterase Culp2 (cut2) from Mycobacterium bovis (strain ATCC BAA-935 / AF2122/97).